We begin with the raw amino-acid sequence, 297 residues long: Formamidopyrimidine-DNA glycosylase (297 aa).

The Schiff-base intermediate with DNA role is filled by Pro-2. The active-site Proton donor is the Glu-3. Catalysis depends on Lys-61, which acts as the Proton donor; for beta-elimination activity. Positions 120 and 176 each coordinate DNA. Residues 262–296 (HVYGRQGQPCDRCGTAIVRESFMNRGSHFCPRCQR) form an FPG-type zinc finger. Arg-286 (proton donor; for delta-elimination activity) is an active-site residue.

It belongs to the FPG family. Monomer. Requires Zn(2+) as cofactor.

The enzyme catalyses Hydrolysis of DNA containing ring-opened 7-methylguanine residues, releasing 2,6-diamino-4-hydroxy-5-(N-methyl)formamidopyrimidine.. The catalysed reaction is 2'-deoxyribonucleotide-(2'-deoxyribose 5'-phosphate)-2'-deoxyribonucleotide-DNA = a 3'-end 2'-deoxyribonucleotide-(2,3-dehydro-2,3-deoxyribose 5'-phosphate)-DNA + a 5'-end 5'-phospho-2'-deoxyribonucleoside-DNA + H(+). In terms of biological role, involved in base excision repair of DNA damaged by oxidation or by mutagenic agents. Acts as a DNA glycosylase that recognizes and removes damaged bases. Has a preference for oxidized purines, such as 7,8-dihydro-8-oxoguanine (8-oxoG). Has AP (apurinic/apyrimidinic) lyase activity and introduces nicks in the DNA strand. Cleaves the DNA backbone by beta-delta elimination to generate a single-strand break at the site of the removed base with both 3'- and 5'-phosphates. The polypeptide is Formamidopyrimidine-DNA glycosylase (Leifsonia xyli subsp. xyli (strain CTCB07)).